Here is a 457-residue protein sequence, read N- to C-terminus: MDHLPIFCQLRHRDCLLVGGGDVAERKARLLLEAGARLTVNALAFDPQFNVWAQEGMLTLVQGEFDESLLDTCWLTIAATDDDDVNQRVSDACEIRRIFCNVVDAPKEASFIMPSIIDRSPLMVAVSSGGTSPVLARLLREKLEAILPQHLGQVARYAGQLRARVKTTFATIGERRRFWEKFFVNDRLAQSLANQDQQAVEETTERLLTEPLNHRGEVVLVGAGPGDAGLLTLKGLQQIQQADIVVYDRLVSDDIMNLVRRDADRVFVGKRAGYHCVPQEEINQILLREALKGKRVVRLKGGDPFIFGRGGEELETLCNAGVPFSVVPGITAASGCSAYSGIPLTHRDYAQSVRLVTGHLKTGSELDWHNLAAEKQTLVFYMGLNQAATIQEKLLEHGMQHDMPVALVENGTAITQRVVSGVLTQLGELAKQVESPALIVVGRVVELREKLNWFSNH.

The interval M1–T204 is precorrin-2 dehydrogenase /sirohydrochlorin ferrochelatase. NAD(+) contacts are provided by residues D22–V23 and L43–A44. S128 is modified (phosphoserine). The uroporphyrinogen-III C-methyltransferase stretch occupies residues G216–H457. Residue P225 coordinates S-adenosyl-L-methionine. D248 functions as the Proton acceptor in the catalytic mechanism. Residue K270 is the Proton donor of the active site. S-adenosyl-L-methionine-binding positions include G301–D303, I306, T331–A332, M382, and G411.

It in the N-terminal section; belongs to the precorrin-2 dehydrogenase / sirohydrochlorin ferrochelatase family. This sequence in the C-terminal section; belongs to the precorrin methyltransferase family.

It carries out the reaction uroporphyrinogen III + 2 S-adenosyl-L-methionine = precorrin-2 + 2 S-adenosyl-L-homocysteine + H(+). The catalysed reaction is precorrin-2 + NAD(+) = sirohydrochlorin + NADH + 2 H(+). The enzyme catalyses siroheme + 2 H(+) = sirohydrochlorin + Fe(2+). The protein operates within cofactor biosynthesis; adenosylcobalamin biosynthesis; precorrin-2 from uroporphyrinogen III: step 1/1. It participates in cofactor biosynthesis; adenosylcobalamin biosynthesis; sirohydrochlorin from precorrin-2: step 1/1. Its pathway is porphyrin-containing compound metabolism; siroheme biosynthesis; precorrin-2 from uroporphyrinogen III: step 1/1. It functions in the pathway porphyrin-containing compound metabolism; siroheme biosynthesis; siroheme from sirohydrochlorin: step 1/1. The protein operates within porphyrin-containing compound metabolism; siroheme biosynthesis; sirohydrochlorin from precorrin-2: step 1/1. Its function is as follows. Multifunctional enzyme that catalyzes the SAM-dependent methylations of uroporphyrinogen III at position C-2 and C-7 to form precorrin-2 via precorrin-1. Then it catalyzes the NAD-dependent ring dehydrogenation of precorrin-2 to yield sirohydrochlorin. Finally, it catalyzes the ferrochelation of sirohydrochlorin to yield siroheme. The polypeptide is Siroheme synthase (Enterobacter sp. (strain 638)).